A 294-amino-acid chain; its full sequence is Cytidine deaminase (294 aa).

CMP/dCMP-type deaminase domains are found at residues 48 to 168 and 187 to 294; these read DDDA…FGPT and AETD…RVTF. 89-91 contacts substrate; the sequence is NME. H102 lines the Zn(2+) pocket. E104 acts as the Proton donor in catalysis. Zn(2+) contacts are provided by C129 and C132.

It belongs to the cytidine and deoxycytidylate deaminase family. Homodimer. It depends on Zn(2+) as a cofactor.

It carries out the reaction cytidine + H2O + H(+) = uridine + NH4(+). It catalyses the reaction 2'-deoxycytidine + H2O + H(+) = 2'-deoxyuridine + NH4(+). Functionally, this enzyme scavenges exogenous and endogenous cytidine and 2'-deoxycytidine for UMP synthesis. The protein is Cytidine deaminase of Yersinia pseudotuberculosis serotype O:1b (strain IP 31758).